Reading from the N-terminus, the 518-residue chain is Cell wall biosynthesis protein LcpA (518 aa).

The Cytoplasmic segment spans residues Met-1–Ser-31. A helical membrane pass occupies residues Val-32–Gly-52. At Lys-53–Asn-518 the chain is on the periplasmic side. The disordered stretch occupies residues Ala-485–Asn-518.

Belongs to the LytR/CpsA/Psr (LCP) family. Forms homodimers and homotetramers.

The protein resides in the cell inner membrane. Functionally, involved in cell wall biosynthesis. May be responsible for the transfer of arabinogalactan onto peptidoglycan. In vitro, has pyrophosphatase activity. The sequence is that of Cell wall biosynthesis protein LcpA from Corynebacterium glutamicum (strain ATCC 13032 / DSM 20300 / JCM 1318 / BCRC 11384 / CCUG 27702 / LMG 3730 / NBRC 12168 / NCIMB 10025 / NRRL B-2784 / 534).